The primary structure comprises 335 residues: G-protein coupled receptor 157 (335 aa).

The Extracellular portion of the chain corresponds to 1 to 15 (MQPSPPPTELVPSER). A helical membrane pass occupies residues 16–36 (AVVLLSCALSALGSGLLVATH). Residues 37–48 (ALWPDLRSRARR) are Cytoplasmic-facing. A helical membrane pass occupies residues 49–69 (LLLFLSLADLLSAASYFYGVL). Residues 70 to 87 (QNFAGPSWDCVLQGALST) are Extracellular-facing. Residues 88-108 (FANTSSFFWTVAIALYLYLSI) form a helical membrane-spanning segment. The Cytoplasmic segment spans residues 109–119 (VRAARGPRTDR). The chain crosses the membrane as a helical span at residues 120 to 140 (LLWAFHVVSWGVPLVITVAAV). Over 141–166 (ALKKIGYDASDVSVGWCWIDLEAKDH) the chain is Extracellular. A helical transmembrane segment spans residues 167-187 (VLWMLLTGKLWEMLAYVLLPL). Residues 188–226 (LYLLVRKHINRAHTALSEYRPILSQEHRLLRHSSMADKK) lie on the Cytoplasmic side of the membrane. A helical transmembrane segment spans residues 227 to 247 (LVLIPLIFIGLRVWSTVRFVL). Residues 248 to 258 (TLCGSPAVQTP) lie on the Extracellular side of the membrane. Residues 259–279 (VLVVLHGIGNTFQGGANCIMF) traverse the membrane as a helical segment. The Cytoplasmic segment spans residues 280-335 (VLCTRAVRTRLFSLCCCCCSSQPPTKSPAGTPKAPAPSKPGESQESQGTPGELPST). A disordered region spans residues 300–335 (SQPPTKSPAGTPKAPAPSKPGESQESQGTPGELPST). A compositionally biased stretch (polar residues) spans 320 to 335 (GESQESQGTPGELPST).

The protein belongs to the G-protein coupled receptor 2 family.

It is found in the cell projection. Its subcellular location is the cilium membrane. In terms of biological role, orphan receptor that promotes neuronal differentiation of radial glial progenitors (RGPs). The activity of this receptor is mediated by a G(q)-protein that activates a phosphatidylinositol-calcium second messenger. In Homo sapiens (Human), this protein is G-protein coupled receptor 157 (GPR157).